A 794-amino-acid polypeptide reads, in one-letter code: Copper-exporting P-type ATPase (794 aa).

HMA domains follow at residues Lys-5 to Leu-70 and Glu-72 to Gln-138. Positions 16, 19, 83, and 86 each coordinate Cu(+). 6 consecutive transmembrane segments (helical) span residues Ile-162–Ile-182, Ile-187–Trp-207, Met-224–Val-244, Ala-250–Phe-270, Tyr-411–Val-431, and Pro-438–Ala-458. The active-site 4-aspartylphosphate intermediate is the Asp-495. Positions 689 and 693 each coordinate Mg(2+). The next 2 helical transmembrane spans lie at Leu-747 to Leu-766 and Ile-770 to Leu-789.

This sequence belongs to the cation transport ATPase (P-type) (TC 3.A.3) family. Type IB subfamily.

The protein resides in the cell membrane. It catalyses the reaction Cu(+)(in) + ATP + H2O = Cu(+)(out) + ADP + phosphate + H(+). Involved in copper export. The polypeptide is Copper-exporting P-type ATPase (copA) (Staphylococcus saprophyticus subsp. saprophyticus (strain ATCC 15305 / DSM 20229 / NCIMB 8711 / NCTC 7292 / S-41)).